The chain runs to 504 residues: Glucose-6-phosphate isomerase (504 aa).

The active-site Proton donor is E333. Residues H364 and K473 contribute to the active site.

The protein belongs to the GPI family.

It is found in the cytoplasm. It carries out the reaction alpha-D-glucose 6-phosphate = beta-D-fructose 6-phosphate. Its pathway is carbohydrate biosynthesis; gluconeogenesis. It participates in carbohydrate degradation; glycolysis; D-glyceraldehyde 3-phosphate and glycerone phosphate from D-glucose: step 2/4. Functionally, catalyzes the reversible isomerization of glucose-6-phosphate to fructose-6-phosphate. In Stenotrophomonas maltophilia (strain K279a), this protein is Glucose-6-phosphate isomerase.